Here is a 400-residue protein sequence, read N- to C-terminus: 3-hydroxybenzoate 6-hydroxylase (400 aa).

The protein belongs to the 3-hydroxybenzoate 6-hydroxylase family. As to quaternary structure, monomer. It depends on FAD as a cofactor.

It carries out the reaction 3-hydroxybenzoate + NADH + O2 + H(+) = 2,5-dihydroxybenzoate + NAD(+) + H2O. Functionally, catalyzes the NAD- or NADP-dependent conversion of 3-hydroxybenzoate to gentisate. The affinity of the enzyme toward NAD is twice as high as for NADP. This chain is 3-hydroxybenzoate 6-hydroxylase (nagX), found in Polaromonas naphthalenivorans (strain CJ2).